We begin with the raw amino-acid sequence, 317 residues long: Aspartate carbamoyltransferase catalytic subunit (317 aa).

The carbamoyl phosphate site is built by R66 and T67. K94 is an L-aspartate binding site. Carbamoyl phosphate contacts are provided by R116, H144, and Q147. Positions 177 and 231 each coordinate L-aspartate. Carbamoyl phosphate-binding residues include G272 and P273.

The protein belongs to the aspartate/ornithine carbamoyltransferase superfamily. ATCase family. Heterododecamer (2C3:3R2) of six catalytic PyrB chains organized as two trimers (C3), and six regulatory PyrI chains organized as three dimers (R2).

The enzyme catalyses carbamoyl phosphate + L-aspartate = N-carbamoyl-L-aspartate + phosphate + H(+). Its pathway is pyrimidine metabolism; UMP biosynthesis via de novo pathway; (S)-dihydroorotate from bicarbonate: step 2/3. Functionally, catalyzes the condensation of carbamoyl phosphate and aspartate to form carbamoyl aspartate and inorganic phosphate, the committed step in the de novo pyrimidine nucleotide biosynthesis pathway. This chain is Aspartate carbamoyltransferase catalytic subunit, found in Rhodopseudomonas palustris (strain ATCC BAA-98 / CGA009).